We begin with the raw amino-acid sequence, 116 residues long: Large ribosomal subunit protein bL20 (116 aa).

It belongs to the bacterial ribosomal protein bL20 family.

In terms of biological role, binds directly to 23S ribosomal RNA and is necessary for the in vitro assembly process of the 50S ribosomal subunit. It is not involved in the protein synthesizing functions of that subunit. The chain is Large ribosomal subunit protein bL20 from Picosynechococcus sp. (strain ATCC 27264 / PCC 7002 / PR-6) (Agmenellum quadruplicatum).